The sequence spans 234 residues: SPX domain-containing protein 6 (234 aa).

Residues 1 to 137 (MKFGKLLKRQ…GGALAAPVAE (137 aa)) enclose the SPX domain. The tract at residues 202–234 (GSSTHGRHSLPPLTLPDSDWLRSFQPPSPIPIQ) is disordered.

As to expression, predominantly expressed in roots and leaves.

In terms of biological role, may be involved in maintaining cellular Pi homeostasis when plants are exposed to an external change in Pi. The protein is SPX domain-containing protein 6 of Oryza sativa subsp. japonica (Rice).